The chain runs to 199 residues: FMN-dependent NADH:quinone oxidoreductase 4 (199 aa).

FMN contacts are provided by residues Ser10, 95–98 (MYNL), and 139–142 (SRGG).

Belongs to the azoreductase type 1 family. Homodimer. FMN serves as cofactor.

The catalysed reaction is 2 a quinone + NADH + H(+) = 2 a 1,4-benzosemiquinone + NAD(+). It carries out the reaction N,N-dimethyl-1,4-phenylenediamine + anthranilate + 2 NAD(+) = 2-(4-dimethylaminophenyl)diazenylbenzoate + 2 NADH + 2 H(+). Its function is as follows. Quinone reductase that provides resistance to thiol-specific stress caused by electrophilic quinones. Functionally, also exhibits azoreductase activity. Catalyzes the reductive cleavage of the azo bond in aromatic azo compounds to the corresponding amines. The polypeptide is FMN-dependent NADH:quinone oxidoreductase 4 (Burkholderia lata (strain ATCC 17760 / DSM 23089 / LMG 22485 / NCIMB 9086 / R18194 / 383)).